Reading from the N-terminus, the 155-residue chain is Lipoprotein signal peptidase (155 aa).

2 helical membrane passes run 52 to 72 and 85 to 105; these read ILQG…AGIV and LGVA…DRVF. Catalysis depends on residues Asp-111 and Asp-129. The chain crosses the membrane as a helical span at residues 124-144; it reads IFNIADSSLCVGVILLFIQML.

The protein belongs to the peptidase A8 family.

It localises to the cell membrane. It carries out the reaction Release of signal peptides from bacterial membrane prolipoproteins. Hydrolyzes -Xaa-Yaa-Zaa-|-(S,diacylglyceryl)Cys-, in which Xaa is hydrophobic (preferably Leu), and Yaa (Ala or Ser) and Zaa (Gly or Ala) have small, neutral side chains.. The protein operates within protein modification; lipoprotein biosynthesis (signal peptide cleavage). Its function is as follows. This protein specifically catalyzes the removal of signal peptides from prolipoproteins. The chain is Lipoprotein signal peptidase from Bacillus pumilus (strain SAFR-032).